A 222-amino-acid chain; its full sequence is Beta-casein (222 aa).

The N-terminal stretch at Met1–Ala15 is a signal peptide. Position 27 is a phosphothreonine (Thr27). Phosphoserine is present on residues Ser30, Ser32, Ser33, and Ser34.

This sequence belongs to the beta-casein family. Mammary gland specific. Secreted in milk.

It localises to the secreted. In terms of biological role, important role in determination of the surface properties of the casein micelles. The chain is Beta-casein (CSN2) from Ovis aries (Sheep).